We begin with the raw amino-acid sequence, 187 residues long: Threonylcarbamoyl-AMP synthase (187 aa).

In terms of domain architecture, YrdC-like spans 3-187 (EVLPADVAEL…AKSGQVIRKG (185 aa)).

It belongs to the SUA5 family. TsaC subfamily.

The protein resides in the cytoplasm. It carries out the reaction L-threonine + hydrogencarbonate + ATP = L-threonylcarbamoyladenylate + diphosphate + H2O. Required for the formation of a threonylcarbamoyl group on adenosine at position 37 (t(6)A37) in tRNAs that read codons beginning with adenine. Catalyzes the conversion of L-threonine, HCO(3)(-)/CO(2) and ATP to give threonylcarbamoyl-AMP (TC-AMP) as the acyladenylate intermediate, with the release of diphosphate. The sequence is that of Threonylcarbamoyl-AMP synthase from Shewanella halifaxensis (strain HAW-EB4).